The sequence spans 334 residues: Porphobilinogen deaminase (334 aa).

Residue Cys-258 is modified to S-(dipyrrolylmethanemethyl)cysteine.

Belongs to the HMBS family. As to quaternary structure, monomer. It depends on dipyrromethane as a cofactor.

The catalysed reaction is 4 porphobilinogen + H2O = hydroxymethylbilane + 4 NH4(+). The protein operates within porphyrin-containing compound metabolism; protoporphyrin-IX biosynthesis; coproporphyrinogen-III from 5-aminolevulinate: step 2/4. Its function is as follows. Tetrapolymerization of the monopyrrole PBG into the hydroxymethylbilane pre-uroporphyrinogen in several discrete steps. In Ralstonia nicotianae (strain ATCC BAA-1114 / GMI1000) (Ralstonia solanacearum), this protein is Porphobilinogen deaminase.